A 224-amino-acid polypeptide reads, in one-letter code: Peroxiredoxin-6 (224 aa).

One can recognise a Thioredoxin domain in the interval 5-169 (LLLGDVAPNF…ILRVVISLQL (165 aa)). Residues 31-40 (DSWGILFSHP) are required and sufficient for targeting to lysosomes and lamellar bodies. T44 bears the Phosphothreonine mark. C47 serves as the catalytic Cysteine sulfenic acid (-SOH) intermediate; for peroxidase activity. K63 is modified (N6-acetyllysine). Y89 is subject to Phosphotyrosine. The active-site For phospholipase activity is the D140. T177 carries the phosphothreonine; by MAPK modification. K209 is modified (N6-acetyllysine; alternate). K209 bears the N6-succinyllysine; alternate mark.

It belongs to the peroxiredoxin family. Prx6 subfamily. In terms of assembly, homodimer. Interacts with GSTP1; mediates PRDX6 glutathionylation and regeneration. Interacts with APEX1. Interacts with STH. May interact with FAM168B. May interact with HTR2A. In terms of processing, irreversibly inactivated by overoxidation of Cys-47 to sulfinic acid (Cys-SO(2)H) and sulfonic acid (Cys-SO(3)H) forms upon oxidative stress. Phosphorylation at Thr-177 by MAP kinases increases the phospholipase activity of the enzyme. The phosphorylated form exhibits a greater lysophosphatidylcholine acyltransferase activity compared to the non-phosphorylated form.

Its subcellular location is the cytoplasm. It localises to the lysosome. The enzyme catalyses a hydroperoxide + 2 glutathione = an alcohol + glutathione disulfide + H2O. It carries out the reaction a 1,2-diacyl-sn-glycero-3-phosphocholine + H2O = a 1-acyl-sn-glycero-3-phosphocholine + a fatty acid + H(+). The catalysed reaction is a 1-acyl-sn-glycero-3-phosphocholine + an acyl-CoA = a 1,2-diacyl-sn-glycero-3-phosphocholine + CoA. It catalyses the reaction 1-hexadecanoyl-sn-glycero-3-phosphocholine + hexadecanoyl-CoA = 1,2-dihexadecanoyl-sn-glycero-3-phosphocholine + CoA. The enzyme catalyses 1,2-dihexadecanoyl-sn-glycero-3-phosphocholine + H2O = 1-hexadecanoyl-sn-glycero-3-phosphocholine + hexadecanoate + H(+). Functionally, thiol-specific peroxidase that catalyzes the reduction of hydrogen peroxide and organic hydroperoxides to water and alcohols, respectively. Can reduce H(2)O(2) and short chain organic, fatty acid, and phospholipid hydroperoxides. Also has phospholipase activity, and can therefore either reduce the oxidized sn-2 fatty acyl group of phospholipids (peroxidase activity) or hydrolyze the sn-2 ester bond of phospholipids (phospholipase activity). These activities are dependent on binding to phospholipids at acidic pH and to oxidized phospholipds at cytosolic pH. Plays a role in cell protection against oxidative stress by detoxifying peroxides and in phospholipid homeostasis. Exhibits acyl-CoA-dependent lysophospholipid acyltransferase which mediates the conversion of lysophosphatidylcholine (1-acyl-sn-glycero-3-phosphocholine or LPC) into phosphatidylcholine (1,2-diacyl-sn-glycero-3-phosphocholine or PC). Shows a clear preference for LPC as the lysophospholipid and for palmitoyl CoA as the fatty acyl substrate. The protein is Peroxiredoxin-6 (PRDX6) of Pongo abelii (Sumatran orangutan).